The primary structure comprises 137 residues: Ribonuclease P protein component (137 aa).

Belongs to the RnpA family. In terms of assembly, consists of a catalytic RNA component (M1 or rnpB) and a protein subunit.

The enzyme catalyses Endonucleolytic cleavage of RNA, removing 5'-extranucleotides from tRNA precursor.. RNaseP catalyzes the removal of the 5'-leader sequence from pre-tRNA to produce the mature 5'-terminus. It can also cleave other RNA substrates such as 4.5S RNA. The protein component plays an auxiliary but essential role in vivo by binding to the 5'-leader sequence and broadening the substrate specificity of the ribozyme. In Porphyromonas gingivalis (strain ATCC BAA-308 / W83), this protein is Ribonuclease P protein component.